Consider the following 196-residue polypeptide: SAGA-associated factor 11 homolog (196 aa).

The segment at 1-22 (MSAANMPTTTGAQGSGNQVPTT) is disordered. The SGF11-type zinc-finger motif lies at 106-127 (CTCPNCDRLVAAARFAPHLEKC). A disordered region spans residues 141–196 (RLATKEGATSAHLHSSGNTGGTDDEDDVDWSSDKRRKKSNQNSRNNGSKKNNGKTF). Ser172 carries the phosphoserine modification. A compositionally biased stretch (low complexity) spans 180–196 (NQNSRNNGSKKNNGKTF).

It belongs to the SGF11 family. Component of some SAGA transcription coactivator-HAT complexes, at least composed of Ada2b, not/nonstop, Pcaf/Gcn5, Sgf11 and Spt3. Within the SAGA complex, Sgf11, e(y)2, and not/nonstop form an additional subcomplex of SAGA called the DUB module (deubiquitination module). Interacts directly with not/nonstop. Interacts with the AMEX complex component xmas-2. Interacts with Cbp80; important for promoter recruitment of Sgf11 that is not associated with the DUB module.

It is found in the nucleus. Its subcellular location is the nucleoplasm. The protein localises to the cytoplasm. Functionally, component of the transcription regulatory histone acetylation (HAT) complex SAGA, a multiprotein complex that activates transcription by remodeling chromatin and mediating histone acetylation and deubiquitination. Within the SAGA complex, participates in a subcomplex that specifically deubiquitinates histone H2B. The SAGA complex is recruited to specific gene promoters by activators, where it is required for transcription. Required for nuclear receptor-mediated transactivation. Binds independently on SAGA to promoters in an RNA-dependent manner. Binds to mRNA and is essential for total mRNA export from the nucleus. Required to counteract heterochromatin silencing. Controls the development of neuronal connectivity in visual system by being required for accurate axon targeting in the optic lobe. Required for expression of ecdysone-induced genes such as br/broad. In Drosophila simulans (Fruit fly), this protein is SAGA-associated factor 11 homolog.